A 635-amino-acid chain; its full sequence is Threonine--tRNA ligase (635 aa).

Positions 1-61 (MVSIRLPDGS…DRDASLAIVT (61 aa)) constitute a TGS domain. A catalytic region spans residues 242 to 533 (DHRKLGKQLD…LIEHHAGAMP (292 aa)). Residues cysteine 333, histidine 384, and histidine 510 each contribute to the Zn(2+) site.

Belongs to the class-II aminoacyl-tRNA synthetase family. As to quaternary structure, homodimer. Requires Zn(2+) as cofactor.

It is found in the cytoplasm. The enzyme catalyses tRNA(Thr) + L-threonine + ATP = L-threonyl-tRNA(Thr) + AMP + diphosphate + H(+). Catalyzes the attachment of threonine to tRNA(Thr) in a two-step reaction: L-threonine is first activated by ATP to form Thr-AMP and then transferred to the acceptor end of tRNA(Thr). Also edits incorrectly charged L-seryl-tRNA(Thr). This chain is Threonine--tRNA ligase, found in Burkholderia orbicola (strain MC0-3).